The following is a 1088-amino-acid chain: RNA-directed RNA polymerase (1088 aa).

A RdRp catalytic domain is found at 501–687 (LSYGDVTRFL…AKRYIAGGKI (187 aa)).

It belongs to the reoviridae RNA-directed RNA polymerase family. In terms of assembly, interacts with VP3 (Potential). Interacts with VP2; this interaction activates VP1. Interacts with NSP5; this interaction is probably necessary for the formation of functional virus factories. Interacts with NSP2; this interaction is weak. It depends on Mg(2+) as a cofactor.

The protein localises to the virion. It catalyses the reaction RNA(n) + a ribonucleoside 5'-triphosphate = RNA(n+1) + diphosphate. Its function is as follows. RNA-directed RNA polymerase that is involved in both transcription and genome replication. Together with VP3 capping enzyme, forms an enzyme complex positioned near the channels situated at each of the five-fold vertices of the core. Following infection, the outermost layer of the virus is lost, leaving a double-layered particle (DLP) made up of the core and VP6 shell. VP1 then catalyzes the transcription of fully conservative plus-strand genomic RNAs that are extruded through the DLP's channels into the cytoplasm where they function as mRNAs for translation of viral proteins. One copy of each of the viral (+)RNAs is also recruited during core assembly, together with newly synthesized polymerase complexes and VP2. The polymerase of these novo-formed particles catalyzes the synthesis of complementary minus-strands leading to dsRNA formation. To do so, the polymerase specifically recognizes and binds 4 bases 5'-UGUG-3' in the conserved 3'-sequence of plus-strand RNA templates. VP2 presumably activates the autoinhibited VP1-RNA complex to coordinate packaging and genome replication. Once dsRNA synthesis is complete, the polymerase switches to the transcriptional mode, thus providing secondary transcription. The polypeptide is RNA-directed RNA polymerase (Rotavirus A (strain RVA/SA11-Both/G3P5B[2]) (RV-A)).